The sequence spans 617 residues: Chaperone protein HscA homolog (617 aa).

Belongs to the heat shock protein 70 family.

In terms of biological role, chaperone involved in the maturation of iron-sulfur cluster-containing proteins. Has a low intrinsic ATPase activity which is markedly stimulated by HscB. In Aliivibrio salmonicida (strain LFI1238) (Vibrio salmonicida (strain LFI1238)), this protein is Chaperone protein HscA homolog.